The following is a 974-amino-acid chain: Alpha-1,4 glucan phosphorylase L-2 isozyme, chloroplastic/amyloplastic (974 aa).

The N-terminal 81 residues, 1–81, are a transit peptide targeting the chloroplast; that stretch reads MATFAVSGLN…LDVFQPDSTS (81 aa). The tract at residues 509-551 is disordered; that stretch reads ADVEKAADEEQEEEGKDDSKDEETEAVKAETTNEEEETEVKKV. Residues 517–532 are compositionally biased toward acidic residues; sequence EEQEEEGKDDSKDEET. Lys820 carries the post-translational modification N6-(pyridoxal phosphate)lysine.

Belongs to the glycogen phosphorylase family. Pyridoxal 5'-phosphate is required as a cofactor. In terms of tissue distribution, leaves.

Its subcellular location is the plastid. The protein resides in the chloroplast. It is found in the amyloplast. It carries out the reaction [(1-&gt;4)-alpha-D-glucosyl](n) + phosphate = [(1-&gt;4)-alpha-D-glucosyl](n-1) + alpha-D-glucose 1-phosphate. Functionally, phosphorylase is an important allosteric enzyme in carbohydrate metabolism. Enzymes from different sources differ in their regulatory mechanisms and in their natural substrates. However, all known phosphorylases share catalytic and structural properties. The chain is Alpha-1,4 glucan phosphorylase L-2 isozyme, chloroplastic/amyloplastic (STP-1) from Solanum tuberosum (Potato).